The following is a 210-amino-acid chain: Uridine kinase (210 aa).

Residue 12-19 (GGSGGGKT) participates in ATP binding.

The protein belongs to the uridine kinase family.

The protein localises to the cytoplasm. The catalysed reaction is uridine + ATP = UMP + ADP + H(+). It catalyses the reaction cytidine + ATP = CMP + ADP + H(+). Its pathway is pyrimidine metabolism; CTP biosynthesis via salvage pathway; CTP from cytidine: step 1/3. It participates in pyrimidine metabolism; UMP biosynthesis via salvage pathway; UMP from uridine: step 1/1. The chain is Uridine kinase from Streptococcus uberis (strain ATCC BAA-854 / 0140J).